The sequence spans 168 residues: Bifunctional protein PyrR (168 aa).

Substrate-binding positions include 36–37 (TG), R77, 94–102 (DDVLMSGRT), and V151. Positions 90-102 (LVLIDDVLMSGRT) match the PRPP-binding motif.

It belongs to the purine/pyrimidine phosphoribosyltransferase family. PyrR subfamily.

The catalysed reaction is UMP + diphosphate = 5-phospho-alpha-D-ribose 1-diphosphate + uracil. Its function is as follows. Regulates the transcription of the pyrimidine nucleotide (pyr) operon in response to exogenous pyrimidines. In terms of biological role, also displays a weak uracil phosphoribosyltransferase activity which is not physiologically significant. This Pseudomonas fluorescens protein is Bifunctional protein PyrR.